The sequence spans 256 residues: Isoprenyl transferase (256 aa).

The active site involves Asp33. Position 33 (Asp33) interacts with Mg(2+). Residues 34–37 (GNGR), Trp38, Arg46, His50, and 78–80 (STE) each bind substrate. The active-site Proton acceptor is the Asn81. Substrate contacts are provided by residues Trp82, Arg84, Arg201, and 207-209 (RIS). A Mg(2+)-binding site is contributed by Glu220.

Belongs to the UPP synthase family. Homodimer. The cofactor is Mg(2+).

Functionally, catalyzes the condensation of isopentenyl diphosphate (IPP) with allylic pyrophosphates generating different type of terpenoids. This chain is Isoprenyl transferase, found in Staphylococcus aureus (strain Mu50 / ATCC 700699).